Consider the following 160-residue polypeptide: Cytochrome b6-f complex subunit 4 (160 aa).

A run of 3 helical transmembrane segments spans residues 36–56 (LLYI…GLAV), 95–115 (LLGV…PFLE), and 131–151 (TVFL…TLPI).

It belongs to the cytochrome b family. PetD subfamily. As to quaternary structure, the 4 large subunits of the cytochrome b6-f complex are cytochrome b6, subunit IV (17 kDa polypeptide, petD), cytochrome f and the Rieske protein, while the 4 small subunits are petG, petL, petM and petN. The complex functions as a dimer.

It localises to the plastid. The protein resides in the chloroplast thylakoid membrane. Functionally, component of the cytochrome b6-f complex, which mediates electron transfer between photosystem II (PSII) and photosystem I (PSI), cyclic electron flow around PSI, and state transitions. This Oryza sativa (Rice) protein is Cytochrome b6-f complex subunit 4.